A 2766-amino-acid chain; its full sequence is Thyroglobulin (2766 aa).

Residues 1–20 (MTALVLWVSTLLSSVCLVAA) form the signal peptide. Tyr25 carries the iodotyrosine; alternate modification. Tyr25 carries the post-translational modification Sulfotyrosine; alternate. The residue at position 25 (Tyr25) is a Thyroxine; alternate. Tyr25 carries the triiodothyronine; alternate modification. Thyroglobulin type-1 domains are found at residues 32–93 (LRPC…PTVC), 94–161 (LSFC…PTRC), 162–298 (PRSC…RFRC), and 299–359 (PTKC…PPSC). 8 cysteine pairs are disulfide-bonded: Cys35–Cys53, Cys64–Cys71, Cys73–Cys93, Cys97–Cys121, Cys132–Cys139, Cys141–Cys161, Cys165–Cys184, and Cys195–Cys236. Tyr109 carries the iodotyrosine modification. Asn111 carries N-linked (GlcNAc...) asparagine glycosylation. Tyr150 carries the iodotyrosine; alternate modification. Position 150 is a diiodotyrosine; alternate (Tyr150). A glycan (N-linked (GlcNAc...) asparagine) is linked at Asn199. An iodotyrosine mark is found at Tyr235 and Tyr259. Intrachain disulfides connect Cys302–Cys320, Cys331–Cys337, Cys339–Cys359, Cys365–Cys620, Cys408–Cys608, Cys631–Cys636, Cys638–Cys658, Cys662–Cys687, and Cys698–Cys703. 2 N-linked (GlcNAc...) asparagine glycosylation sites follow: Asn484 and Asn496. Thyroglobulin type-1 domains are found at residues 605–658 (AQAC…RPRC), 659–726 (PTKC…AKQC), 727–922 (PSVC…IPAC), 923–1074 (PGPC…MPQC), 1075–1146 (PTNC…SAQC), and 1147–1211 (PGLC…QPAC). Position 704 is an iodotyrosine; alternate (Tyr704). At Tyr704 the chain carries Thyroxine; alternate. The residue at position 704 (Tyr704) is a Triiodothyronine; alternate. A Diiodotyrosine; alternate modification is found at Tyr704. 16 cysteine pairs are disulfide-bonded: Cys705/Cys726, Cys730/Cys763, Cys774/Cys899, Cys901/Cys922, Cys926/Cys1032, Cys1043/Cys1050, Cys1052/Cys1074, Cys1078/Cys1109, Cys1127/Cys1146, Cys1150/Cys1170, Cys1182/Cys1189, Cys1191/Cys1211, Cys1216/Cys1265, Cys1232/Cys1246, Cys1306/Cys1356, and Cys1331/Cys1347. Asn748 carries N-linked (GlcNAc...) asparagine glycosylation. Residue Tyr785 is modified to Iodotyrosine. Asn817 is a glycosylation site (N-linked (GlcNAc...) asparagine). Residue Tyr867 is modified to Iodotyrosine; alternate. At Tyr867 the chain carries Diiodotyrosine; alternate. At Tyr884 the chain carries Diiodotyrosine. N-linked (GlcNAc...) asparagine glycosylation occurs at Asn948. Position 993 is an iodotyrosine; alternate (Tyr993). Residue Tyr993 is modified to Diiodotyrosine; alternate. Asn1141 carries an N-linked (GlcNAc...) asparagine glycan. At Tyr1310 the chain carries Iodotyrosine. The residue at position 1310 (Tyr1310) is a Thyroxine. Asn1349 and Asn1365 each carry an N-linked (GlcNAc...) asparagine glycan. 9 cysteine pairs are disulfide-bonded: Cys1441–Cys1458, Cys1461–Cys1472, Cys1475–Cys1489, Cys1492–Cys1509, Cys1513–Cys1522, Cys1542–Cys1564, Cys1602–Cys1626, Cys1606–Cys1612, and Cys1638–Cys1661. Type II repeat units follow at residues 1455–1468 (ALGC…SFSQ), 1469–1485 (DGRC…EQAG), and 1486–1502 (SSAC…ITTG). The region spanning 1510 to 1564 (VTDCQKNEAGLQCDQNGQYQASQKNRDSGEVFCVDSEGRKLQWLQTEAGLSESQC) is the Thyroglobulin type-1 11 domain. A Type IIIA repeat occupies 1602-1722 (CLTDCANDEA…GANLTDTHTY (121 aa)). Residues Asn1715, Asn1729, Asn1773, and Asn1864 are each glycosylated (N-linked (GlcNAc...) asparagine). Cystine bridges form between Cys1723–Cys1748, Cys1727–Cys1733, Cys1732–Cys1834, and Cys1759–Cys1776. One copy of the Type IIIB repeat lies at 1723-1889 (CLLACDNDSC…LFSAEQANLW (167 aa)). Cystine bridges form between Cys1890–Cys1916, Cys1894–Cys1901, Cys1925–Cys1936, Cys1993–Cys2021, Cys1997–Cys2003, Cys2002–Cys2073, and Cys2032–Cys2045. The Type IIIA repeat unit spans residues 1890–1992 (CLSRCAQEPI…GKLISNGFFE (103 aa)). Asn1935 carries an N-linked (GlcNAc...) asparagine glycan. The Type IIIB repeat unit spans residues 1993-2125 (CERLCDRDPC…AATSNFSMAQ (133 aa)). N-linked (GlcNAc...) asparagine glycosylation occurs at Asn2010. A glycan (N-linked (GlcNAc...) asparagine) is linked at Asn2120. A Type IIIA repeat occupies 2126–2183 (DFCLQQCSRHQDCLVTTLQIQPGVVRCVFYPDIQNCIHSLRSHTCWLLLHEEATYIYR). 3 disulfides stabilise this stretch: Cys2128/Cys2152, Cys2132/Cys2138, and Cys2161/Cys2170. Tyr2182 carries the iodotyrosine modification. The cholinesterase-like (ChEL) stretch occupies residues 2186-2766 (GIPLVQSDVT…LEPVPKSYSK (581 aa)). An N-linked (GlcNAc...) asparagine glycan is attached at Asn2249. Cys2263 and Cys2280 form a disulfide bridge. A glycan (N-linked (GlcNAc...) asparagine) is linked at Asn2294. Cys2441 and Cys2452 are oxidised to a cystine. Tyr2539 is subject to Thyroxine. An Iodotyrosine; alternate modification is found at Tyr2572. Tyr2572 carries the thyroxine; alternate modification. Triiodothyronine; alternate is present on Tyr2572. Tyr2572 is modified (diiodotyrosine; alternate). An N-linked (GlcNAc...) asparagine glycan is attached at Asn2581. Residues Tyr2586 and Tyr2616 each carry the iodotyrosine modification. Residues Cys2590 and Cys2714 are joined by a disulfide bond. Tyr2696 is subject to Diiodotyrosine. The interval 2729–2766 (GAKDAQLTKSEEEDLEVGPGLEEDLSGSLEPVPKSYSK) is disordered. The segment covering 2739 to 2753 (EEEDLEVGPGLEEDL) has biased composition (acidic residues). Tyr2764 is subject to Iodotyrosine; alternate. Tyr2764 carries the thyroxine; alternate modification. Tyr2764 carries the post-translational modification Triiodothyronine; alternate. Tyr2764 bears the Diiodotyrosine; alternate mark.

Belongs to the type-B carboxylesterase/lipase family. In terms of assembly, monomer. Homodimer (via ChEL region); occurs in the endoplasmic reticulum and is required for export to the Golgi apparatus. Homooligomer; disulfide-linked; stored in this form in the thyroid follicle lumen. Post-translationally, iodinated on tyrosine residues by TPO. There are 4 pairs of iodinated tyrosines used for coupling: acceptor Tyr-25 is coupled to donor Tyr-150 or Tyr-235, acceptor Tyr-2572 is coupled to donor Tyr-2539, acceptor Tyr-2764 in monomer 1 is coupled to donor Tyr-2764 in monomer 2 and acceptor Tyr-1310 in monomer 1 is coupled to donor Tyr-109 in monomer 2. Sulfated tyrosines are desulfated during iodination. In terms of processing, undergoes sequential proteolysis by cathepsins to release thyroxine (T4) and triiodothyronine (T3) hormones. In the thyroid follicle lumen, cross-linked TG (storage form) is solubilized by limited proteolysis mediated by cathepsins CTSB and/or CTSL. Partially cleaved TG is further processed by CTSK/cathepsin K and/or CTSL resulting in the release of T4. Following endocytosis, further processing occurs leading to the release of T3 and more T4 hormones. In terms of tissue distribution, specifically expressed in the thyroid gland.

The protein resides in the secreted. Acts as a substrate for the production of iodinated thyroid hormones thyroxine (T4) and triiodothyronine (T3). The synthesis of T3 and T4 involves iodination of selected tyrosine residues of TG/thyroglobulin followed by their oxidative coupling. Following TG re-internalization and lysosomal-mediated proteolysis, T3 and T4 are released from the polypeptide backbone leading to their secretion into the bloodstream. One dimer produces 7 thyroid hormone molecules. The sequence is that of Thyroglobulin (Tg) from Mus musculus (Mouse).